Here is a 516-residue protein sequence, read N- to C-terminus: MEXLQGYLEXDRSRQQYFLYPLLFQEYIYTLAHGHGLNGSIFDEPVEIFGFDNKSSSVLVKRLITRMYQQNYLVYLVNDSNQNRSIGRNHFFYSQFFFQMVSEGFAAIVEIPFSLQLVFSSXEXERPKSHNLRSIHSIFPFLEDKFSHLNYVSEILIPHPIHMETLVQILQCWVRDVPSLHFLRFFLHEYDNWNSFITPNKSSYAFSKENKRFFWFFYNSYVFEFEFLLVFLRKQSYYLQSTSFGXFLDRXHFYGKKERLISACCNYSQKTLRFFKDPFMHYIRYQGKAILASRDTHILMKKWKCYLVNFWQYYFHFLSYPYRIQINQLKNHSFFFLGYLSSVLINPLAVKNKMLDHSFLIDTVTKKFDTTIPVIPLIGSLSKAKFCTVSGYPSSKTIWADLSDSDIVGRFGRICRNLSHYYSGSSKKQSLYRIKYXXRLSCARTLARKHKRTIRTLLQRLGSGFLEEFFTEEEQVLSLIFSKTTIPFPLYRLHRERIWYLDIIRINDLTNHLDWP.

It belongs to the intron maturase 2 family. MatK subfamily.

The protein localises to the plastid. Its subcellular location is the chloroplast. Usually encoded in the trnK tRNA gene intron. Probably assists in splicing its own and other chloroplast group II introns. The polypeptide is Maturase K (Disporum sessile (Japanese fairy bells)).